Here is a 481-residue protein sequence, read N- to C-terminus: UDP-N-acetylmuramoylalanine--D-glutamate ligase (481 aa).

An ATP-binding site is contributed by 108-114 (GTNGKTS).

This sequence belongs to the MurCDEF family.

The protein resides in the cytoplasm. It carries out the reaction UDP-N-acetyl-alpha-D-muramoyl-L-alanine + D-glutamate + ATP = UDP-N-acetyl-alpha-D-muramoyl-L-alanyl-D-glutamate + ADP + phosphate + H(+). Its pathway is cell wall biogenesis; peptidoglycan biosynthesis. In terms of biological role, cell wall formation. Catalyzes the addition of glutamate to the nucleotide precursor UDP-N-acetylmuramoyl-L-alanine (UMA). This chain is UDP-N-acetylmuramoylalanine--D-glutamate ligase, found in Bifidobacterium longum subsp. infantis (strain ATCC 15697 / DSM 20088 / JCM 1222 / NCTC 11817 / S12).